The sequence spans 282 residues: 2-dehydro-3-deoxyphosphooctonate aldolase (282 aa).

Belongs to the KdsA family.

The protein localises to the cytoplasm. The catalysed reaction is D-arabinose 5-phosphate + phosphoenolpyruvate + H2O = 3-deoxy-alpha-D-manno-2-octulosonate-8-phosphate + phosphate. It functions in the pathway carbohydrate biosynthesis; 3-deoxy-D-manno-octulosonate biosynthesis; 3-deoxy-D-manno-octulosonate from D-ribulose 5-phosphate: step 2/3. Its pathway is bacterial outer membrane biogenesis; lipopolysaccharide biosynthesis. The protein is 2-dehydro-3-deoxyphosphooctonate aldolase of Bartonella bacilliformis (strain ATCC 35685 / KC583 / Herrer 020/F12,63).